Reading from the N-terminus, the 141-residue chain is MAIIIGADTAGSKLKDVVKDFLVGENFEVVDVTQDGQDFVDVTLAVAAEVNKQEENLGIVIDAYGAGPFMVATKIKGMVAAEVSDERSAYMTRGHNNSRMITMGSEIVGEGLAKNIAKGFVNGKYDGGRHQIRVDMLNKMC.

Belongs to the LacAB/RpiB family. Heteromultimeric protein consisting of LacA and LacB.

It carries out the reaction aldehydo-D-galactose 6-phosphate = keto-D-tagatose 6-phosphate. It participates in carbohydrate metabolism; D-galactose 6-phosphate degradation; D-tagatose 6-phosphate from D-galactose 6-phosphate: step 1/1. In Streptococcus agalactiae serotype III (strain NEM316), this protein is Galactose-6-phosphate isomerase subunit LacA 1.